Here is a 117-residue protein sequence, read N- to C-terminus: Cuticle protein CP1246 (117 aa).

4 repeat units span residues 1-17 (NYGESGIVYPDGRLVQF), 26-43 (AEIGEAGVVMHDGTHVQF), 67-84 (QSYGYSGIIMPDGNNRQF), and 93-110 (VLVGPSGAVTADGKNVQF).

Calcified shell.

This is Cuticle protein CP1246 from Cancer pagurus (Rock crab).